A 293-amino-acid chain; its full sequence is MDKQNVQMNPPHPGTNLTGPPGHIGYPGPQAGYAVPPPGYASPGPVGFPVQHQPVTGHPGAPTQVPWMPAPLPPLNCPPGLEYLTQIDQLLIHQQIELLEVLIGFETNNKYEIKNSLGQRIYFAAEDTDCCTRNCCGPSRPFTMRILDNMGREVITLERPLRCTSCCFPCCLQEIEIQAPPGVPVGYVTQTWHPCLPKFTIQNERREDVLRISGPCVICSCCADIDFEVKSLDDKYVVGKISKHWTGLIKELFTDVDNFGIQFPLDLDVKMKAVMLGACFLIDFMFFEMTRGE.

Residues methionine 1–glycine 39 are disordered. The proline-rich domain (PRD) stretch occupies residues methionine 1–proline 66. Over methionine 1–lysine 270 the chain is Cytoplasmic. Threonine 143 carries the phosphothreonine; by PKC modification. 4 S-palmitoyl cysteine lipidation sites follow: cysteine 166, cysteine 167, cysteine 170, and cysteine 171. The helical transmembrane segment at methionine 271–phenylalanine 287 threads the bilayer. The Extracellular portion of the chain corresponds to glutamate 288–glutamate 293.

It belongs to the phospholipid scramblase family. Requires Ca(2+) as cofactor.

The protein resides in the membrane. The catalysed reaction is a 1,2-diacyl-sn-glycero-3-phosphocholine(in) = a 1,2-diacyl-sn-glycero-3-phosphocholine(out). Its function is as follows. May catalyze calcium-induced ATP-independent rapid bidirectional and non-specific movement of phospholipids (lipid scrambling or lipid flip-flop) between the inner and outer leaflet of the plasma membrane. This chain is Phospholipid scramblase 2, found in Bos taurus (Bovine).